The sequence spans 184 residues: Interferon alpha-3 (184 aa).

The first 23 residues, Met-1–Gly-23, serve as a signal peptide directing secretion. 2 disulfide bridges follow: Cys-24–Cys-122 and Cys-52–Cys-162.

This sequence belongs to the alpha/beta interferon family.

The protein localises to the secreted. In terms of biological role, produced by macrophages, IFN-alpha have antiviral activities. Interferon stimulates the production of two enzymes: a protein kinase and an oligoadenylate synthetase. In Equus caballus (Horse), this protein is Interferon alpha-3.